The following is a 523-amino-acid chain: Peptidyl-prolyl cis-trans isomerase 4 (523 aa).

In terms of domain architecture, U-box spans 38–111 (KRLPINHCSL…GKFRCPVTFR (74 aa)). A PPIase cyclophilin-type domain is found at 278-433 (KNAFVRLVTN…VSVVIMRAEV (156 aa)).

This sequence belongs to the cyclophilin-type PPIase family. PPIL2 subfamily. In terms of assembly, interacts with mep-1. In terms of tissue distribution, exclusively in the larval body wall striated muscle cells.

It is found in the nucleus. It carries out the reaction [protein]-peptidylproline (omega=180) = [protein]-peptidylproline (omega=0). It catalyses the reaction S-ubiquitinyl-[E2 ubiquitin-conjugating enzyme]-L-cysteine + [acceptor protein]-L-lysine = [E2 ubiquitin-conjugating enzyme]-L-cysteine + N(6)-ubiquitinyl-[acceptor protein]-L-lysine.. The protein operates within protein modification; protein ubiquitination. May catalyze the cis-trans isomerization of proline imidic peptide bonds in oligopeptides thereby assisting the folding of proteins. May also function as a chaperone, playing a role in intracellular transport of proteins. May also have a protein ubiquitin ligase activity acting as an E3 ubiquitin protein ligase or as a ubiquitin-ubiquitin ligase promoting elongation of ubiquitin chains on proteins. Influences the hermaphrodite switch from spermatogenesis to oogenesis. Required for body wall muscle cell development. This is Peptidyl-prolyl cis-trans isomerase 4 (cyn-4) from Caenorhabditis elegans.